Reading from the N-terminus, the 131-residue chain is Replicase polyprotein 1ab (131 aa).

The Nidovirus-type SAM-dependent 2'-O-MTase domain maps to I1–I128.

Functionally, the replicase polyprotein of coronaviruses is a multifunctional protein: it contains the activities necessary for the transcription of negative stranded RNA, leader RNA, subgenomic mRNAs and progeny virion RNA as well as proteinases responsible for the cleavage of the polyprotein into functional products. The polypeptide is Replicase polyprotein 1ab (rep) (Sus scrofa (Pig)).